The chain runs to 353 residues: Photosystem II protein D1 (353 aa).

T2 is subject to N-acetylthreonine. T2 bears the Phosphothreonine mark. Transmembrane regions (helical) follow at residues 29–46 (YIGW…TATS), 118–133 (HFLL…EWEL), and 142–156 (WIAV…AATA). H118 is a chlorophyll a binding site. Y126 contributes to the pheophytin a binding site. 2 residues coordinate [CaMn4O5] cluster: D170 and E189. The helical transmembrane segment at 197-218 (FHMLGVAGVFGGSLFSAMHGSL) threads the bilayer. Residue H198 coordinates chlorophyll a. Residues H215 and 264-265 (SF) each bind a quinone. Position 215 (H215) interacts with Fe cation. Position 272 (H272) interacts with Fe cation. Residues 274-288 (FLAAWPVVGIWFTAL) form a helical membrane-spanning segment. 4 residues coordinate [CaMn4O5] cluster: H332, E333, D342, and A344. The propeptide occupies 345-353 (AVESPSING).

It belongs to the reaction center PufL/M/PsbA/D family. PSII is composed of 1 copy each of membrane proteins PsbA, PsbB, PsbC, PsbD, PsbE, PsbF, PsbH, PsbI, PsbJ, PsbK, PsbL, PsbM, PsbT, PsbX, PsbY, PsbZ, Psb30/Ycf12, at least 3 peripheral proteins of the oxygen-evolving complex and a large number of cofactors. It forms dimeric complexes. Requires The D1/D2 heterodimer binds P680, chlorophylls that are the primary electron donor of PSII, and subsequent electron acceptors. It shares a non-heme iron and each subunit binds pheophytin, quinone, additional chlorophylls, carotenoids and lipids. D1 provides most of the ligands for the Mn4-Ca-O5 cluster of the oxygen-evolving complex (OEC). There is also a Cl(-1) ion associated with D1 and D2, which is required for oxygen evolution. The PSII complex binds additional chlorophylls, carotenoids and specific lipids. as cofactor. In terms of processing, tyr-161 forms a radical intermediate that is referred to as redox-active TyrZ, YZ or Y-Z. C-terminally processed by CTPA; processing is essential to allow assembly of the oxygen-evolving complex and thus photosynthetic growth.

The protein resides in the plastid. It is found in the chloroplast thylakoid membrane. The enzyme catalyses 2 a plastoquinone + 4 hnu + 2 H2O = 2 a plastoquinol + O2. Photosystem II (PSII) is a light-driven water:plastoquinone oxidoreductase that uses light energy to abstract electrons from H(2)O, generating O(2) and a proton gradient subsequently used for ATP formation. It consists of a core antenna complex that captures photons, and an electron transfer chain that converts photonic excitation into a charge separation. The D1/D2 (PsbA/PsbD) reaction center heterodimer binds P680, the primary electron donor of PSII as well as several subsequent electron acceptors. The sequence is that of Photosystem II protein D1 from Sinapis alba (White mustard).